A 308-amino-acid chain; its full sequence is Phosphatidate cytidylyltransferase (308 aa).

8 consecutive transmembrane segments (helical) span residues 30–50, 73–93, 100–120, 127–147, 167–187, 205–225, 235–255, and 280–300; these read FLVL…LGFI, PLST…FLSI, PGFF…WSIF, IGAL…GIPI, IWWA…GYFF, TVVG…IFFL, FPMP…GFFG, and MLDT…FLLI.

It belongs to the CDS family.

It localises to the cell membrane. The enzyme catalyses a 1,2-diacyl-sn-glycero-3-phosphate + CTP + H(+) = a CDP-1,2-diacyl-sn-glycerol + diphosphate. Its pathway is phospholipid metabolism; CDP-diacylglycerol biosynthesis; CDP-diacylglycerol from sn-glycerol 3-phosphate: step 3/3. This Chlamydia pneumoniae (Chlamydophila pneumoniae) protein is Phosphatidate cytidylyltransferase (cdsA).